A 149-amino-acid chain; its full sequence is Calmodulin (149 aa).

A2 carries the N-acetylalanine modification. 4 EF-hand domains span residues E8–N43, P44–D79, D81–K116, and L117–K149. D21, D23, D25, T27, E32, D57, D59, N61, T63, E68, D94, D96, N98, Y100, and E105 together coordinate Ca(2+). K116 carries the N6,N6,N6-trimethyllysine modification. D130, D132, D134, Q136, and E141 together coordinate Ca(2+).

This sequence belongs to the calmodulin family.

Its function is as follows. Calmodulin acts as part of a calcium signal transduction pathway by mediating the control of a large number of enzymes, ion channels, aquaporins and other proteins through calcium-binding. Calcium-binding is required for the activation of calmodulin. Among the enzymes to be stimulated by the calmodulin-calcium complex are a number of protein kinases, such as myosin light-chain kinases and calmodulin-dependent protein kinase type II (CaMK2), and phosphatases. This chain is Calmodulin (calm), found in Oreochromis mossambicus (Mozambique tilapia).